A 65-amino-acid chain; its full sequence is uncharacterized protein (65 aa).

This is an uncharacterized protein from Acheta domesticus (House cricket).